The chain runs to 303 residues: Putative deoxyribose-phosphate aldolase (303 aa).

Asp157 serves as the catalytic Proton donor/acceptor. Lys220 acts as the Schiff-base intermediate with acetaldehyde in catalysis. The active-site Proton donor/acceptor is Lys256.

This sequence belongs to the DeoC/FbaB aldolase family. DeoC type 2 subfamily.

It carries out the reaction 2-deoxy-D-ribose 5-phosphate = D-glyceraldehyde 3-phosphate + acetaldehyde. Its pathway is carbohydrate degradation; 2-deoxy-D-ribose 1-phosphate degradation; D-glyceraldehyde 3-phosphate and acetaldehyde from 2-deoxy-alpha-D-ribose 1-phosphate: step 2/2. In terms of biological role, catalyzes a reversible aldol reaction between acetaldehyde and D-glyceraldehyde 3-phosphate to generate 2-deoxy-D-ribose 5-phosphate. The sequence is that of Putative deoxyribose-phosphate aldolase from Caenorhabditis elegans.